Reading from the N-terminus, the 228-residue chain is Thermonuclease (228 aa).

Residues M1–A23 form the signal peptide. Positions I24–A60 are excised as a propeptide. Positions A58–S70 are enriched in polar residues. A disordered region spans residues A58 to T83. D100 is a binding site for Ca(2+). R114 is an active-site residue. Ca(2+)-binding residues include D119 and T120. Active-site residues include E122 and R166.

Belongs to the thermonuclease family. Ca(2+) is required as a cofactor.

The protein resides in the secreted. It carries out the reaction Endonucleolytic cleavage to nucleoside 3'-phosphates and 3'-phosphooligonucleotide end-products.. Functionally, enzyme that catalyzes the hydrolysis of both DNA and RNA at the 5' position of the phosphodiester bond. The polypeptide is Thermonuclease (nuc) (Staphylococcus aureus (strain COL)).